Here is a 203-residue protein sequence, read N- to C-terminus: Outer-membrane lipoprotein carrier protein (203 aa).

The signal sequence occupies residues 1-21; sequence MKKLILIGCLMAGMNINVAWA.

The protein belongs to the LolA family. Monomer.

It localises to the periplasm. In terms of biological role, participates in the translocation of lipoproteins from the inner membrane to the outer membrane. Only forms a complex with a lipoprotein if the residue after the N-terminal Cys is not an aspartate (The Asp acts as a targeting signal to indicate that the lipoprotein should stay in the inner membrane). The protein is Outer-membrane lipoprotein carrier protein of Photorhabdus laumondii subsp. laumondii (strain DSM 15139 / CIP 105565 / TT01) (Photorhabdus luminescens subsp. laumondii).